We begin with the raw amino-acid sequence, 79 residues long: DNA gyrase inhibitor YacG (79 aa).

The Zn(2+) site is built by Cys7, Cys10, Cys26, and Cys30.

This sequence belongs to the DNA gyrase inhibitor YacG family. As to quaternary structure, interacts with GyrB. It depends on Zn(2+) as a cofactor.

Its function is as follows. Inhibits all the catalytic activities of DNA gyrase by preventing its interaction with DNA. Acts by binding directly to the C-terminal domain of GyrB, which probably disrupts DNA binding by the gyrase. This is DNA gyrase inhibitor YacG from Shewanella pealeana (strain ATCC 700345 / ANG-SQ1).